An 87-amino-acid polypeptide reads, in one-letter code: Small ribosomal subunit protein bS20 (87 aa).

A disordered region spans residues 1–22 (MANSAQARKRARQSLKARAHNA). Positions 7–19 (ARKRARQSLKARA) are enriched in basic residues.

It belongs to the bacterial ribosomal protein bS20 family.

Its function is as follows. Binds directly to 16S ribosomal RNA. The protein is Small ribosomal subunit protein bS20 of Laribacter hongkongensis (strain HLHK9).